We begin with the raw amino-acid sequence, 139 residues long: D-ribose pyranase (139 aa).

The active-site Proton donor is H20. Substrate is bound by residues D28, H106, and 128 to 130 (YAN).

Belongs to the RbsD / FucU family. RbsD subfamily. In terms of assembly, homodecamer.

Its subcellular location is the cytoplasm. It carries out the reaction beta-D-ribopyranose = beta-D-ribofuranose. Its pathway is carbohydrate metabolism; D-ribose degradation; D-ribose 5-phosphate from beta-D-ribopyranose: step 1/2. In terms of biological role, catalyzes the interconversion of beta-pyran and beta-furan forms of D-ribose. This Proteus mirabilis (strain HI4320) protein is D-ribose pyranase.